The primary structure comprises 198 residues: Anthranilate synthase component 2 (198 aa).

Positions 2 to 198 (LLMMIDNYDS…NFLKQTGGRR (197 aa)) constitute a Glutamine amidotransferase type-1 domain. 53-55 (GPC) provides a ligand contact to L-glutamine. The active-site Nucleophile; for GATase activity is cysteine 80. L-glutamine is bound by residues glutamine 84 and 130 to 131 (SL). Catalysis depends on for GATase activity residues histidine 174 and glutamate 176.

Heterotetramer consisting of two non-identical subunits: a beta subunit (TrpG) and a large alpha subunit (TrpE).

It carries out the reaction chorismate + L-glutamine = anthranilate + pyruvate + L-glutamate + H(+). The protein operates within amino-acid biosynthesis; L-tryptophan biosynthesis; L-tryptophan from chorismate: step 1/5. Its function is as follows. Part of a heterotetrameric complex that catalyzes the two-step biosynthesis of anthranilate, an intermediate in the biosynthesis of L-tryptophan. In the first step, the glutamine-binding beta subunit (TrpG) of anthranilate synthase (AS) provides the glutamine amidotransferase activity which generates ammonia as a substrate that, along with chorismate, is used in the second step, catalyzed by the large alpha subunit of AS (TrpE) to produce anthranilate. In the absence of TrpG, TrpE can synthesize anthranilate directly from chorismate and high concentrations of ammonia. The polypeptide is Anthranilate synthase component 2 (trpG) (Pseudomonas putida (Arthrobacter siderocapsulatus)).